Consider the following 257-residue polypeptide: uncharacterized protein (257 aa).

Residues 1-22 (MIHSRKLRLWLYLVLLAVFIGA) form the signal peptide. A lipid anchor (N-palmitoyl cysteine) is attached at Cys-23. A lipid anchor (S-diacylglycerol cysteine) is attached at Cys-23.

Belongs to the staphylococcal tandem lipoprotein family.

The protein resides in the cell membrane. This is an uncharacterized protein from Staphylococcus aureus (strain Mu50 / ATCC 700699).